The sequence spans 143 residues: Transcriptional regulator MraZ (143 aa).

SpoVT-AbrB domains are found at residues 5-47 and 76-119; these read THTP…PMQE and ASSE…DLRT.

Belongs to the MraZ family. Forms oligomers.

It is found in the cytoplasm. It localises to the nucleoid. This chain is Transcriptional regulator MraZ, found in Kineococcus radiotolerans (strain ATCC BAA-149 / DSM 14245 / SRS30216).